The chain runs to 169 residues: Copper-resistant cuproprotein CopI (169 aa).

An N-terminal signal peptide occupies residues 1–20 (MIKKTLLVIALTFTVTTAFA). Cu(2+) is bound by residues H98, C153, H158, and M163.

It belongs to the CopI family.

The protein localises to the periplasm. Functionally, involved in copper tolerance. Mediates copper tolerance in aerobiosis. May also mediate tolerance under anaerobiosis. Not required for virulence or colonization in the mouse model. In Vibrio cholerae serotype O1 (strain ATCC 39315 / El Tor Inaba N16961), this protein is Copper-resistant cuproprotein CopI.